The sequence spans 134 residues: Endoribonuclease YbeY (134 aa).

H94, H98, and H104 together coordinate Zn(2+).

It belongs to the endoribonuclease YbeY family. It depends on Zn(2+) as a cofactor.

The protein localises to the cytoplasm. Its function is as follows. Single strand-specific metallo-endoribonuclease involved in late-stage 70S ribosome quality control and in maturation of the 3' terminus of the 16S rRNA. The polypeptide is Endoribonuclease YbeY (Campylobacter jejuni subsp. jejuni serotype O:23/36 (strain 81-176)).